A 403-amino-acid polypeptide reads, in one-letter code: Acetate kinase (403 aa).

N13 serves as a coordination point for Mg(2+). K20 is an ATP binding site. R94 serves as a coordination point for substrate. Catalysis depends on D153, which acts as the Proton donor/acceptor. ATP contacts are provided by residues 213–217 (HLGNG), 288–290 (DFR), and 336–340 (GIGEN). Mg(2+) is bound at residue E390.

This sequence belongs to the acetokinase family. As to quaternary structure, homodimer. The cofactor is Mg(2+). It depends on Mn(2+) as a cofactor.

The protein localises to the cytoplasm. It carries out the reaction acetate + ATP = acetyl phosphate + ADP. It functions in the pathway metabolic intermediate biosynthesis; acetyl-CoA biosynthesis; acetyl-CoA from acetate: step 1/2. Its function is as follows. Catalyzes the formation of acetyl phosphate from acetate and ATP. Can also catalyze the reverse reaction. The sequence is that of Acetate kinase from Buchnera aphidicola subsp. Schizaphis graminum (strain Sg).